The primary structure comprises 964 residues: uncharacterized protein (964 aa).

Positions 97-117 (DSESDVGSDAESDAESDAESD) are enriched in acidic residues. The disordered stretch occupies residues 97–208 (DSESDVGSDA…SNSIDNESES (112 aa)). Residues 121–148 (HTQNNTNTPINNITLINLDSSNNSTQSD) are compositionally biased toward low complexity. Residues 149–163 (NESDNESDNESDNES) are compositionally biased toward acidic residues. Low complexity predominate over residues 192 to 203 (NSDNIGNSNSID).

This is an uncharacterized protein from Acanthamoeba polyphaga (Amoeba).